A 361-amino-acid polypeptide reads, in one-letter code: S-adenosylmethionine decarboxylase proenzyme (361 aa).

Residues glutamate 11 and glutamate 14 contribute to the active site. Catalysis depends on serine 71, which acts as the Schiff-base intermediate with substrate; via pyruvic acid. A Pyruvic acid (Ser); by autocatalysis modification is found at serine 71. Cysteine 85 functions as the Proton donor; for catalytic activity in the catalytic mechanism. Residues serine 234 and histidine 247 each act as proton acceptor; for processing activity in the active site.

The protein belongs to the eukaryotic AdoMetDC family. Requires pyruvate as cofactor. Is synthesized initially as an inactive proenzyme. Formation of the active enzyme involves a self-maturation process in which the active site pyruvoyl group is generated from an internal serine residue via an autocatalytic post-translational modification. Two non-identical subunits are generated from the proenzyme in this reaction, and the pyruvate is formed at the N-terminus of the alpha chain, which is derived from the carboxyl end of the proenzyme. The post-translation cleavage follows an unusual pathway, termed non-hydrolytic serinolysis, in which the side chain hydroxyl group of the serine supplies its oxygen atom to form the C-terminus of the beta chain, while the remainder of the serine residue undergoes an oxidative deamination to produce ammonia and the pyruvoyl group blocking the N-terminus of the alpha chain.

The catalysed reaction is S-adenosyl-L-methionine + H(+) = S-adenosyl 3-(methylsulfanyl)propylamine + CO2. Its pathway is amine and polyamine biosynthesis; S-adenosylmethioninamine biosynthesis; S-adenosylmethioninamine from S-adenosyl-L-methionine: step 1/1. This Daucus carota (Wild carrot) protein is S-adenosylmethionine decarboxylase proenzyme (SAMDC).